The chain runs to 870 residues: Lon protease (870 aa).

The Lon N-terminal domain occupies 1 to 270; that stretch reads MPTNSYRFLV…KLYEHIHTFA (270 aa). 454–461 serves as a coordination point for ATP; it reads GPPGTGKT. In terms of domain architecture, Lon proteolytic spans 691–870; the sequence is SPQIGTVTGL…YQQIYDFIFK (180 aa). Catalysis depends on residues Ser-777 and Lys-820.

Belongs to the peptidase S16 family. Homohexamer. Organized in a ring with a central cavity.

The protein resides in the cytoplasm. The enzyme catalyses Hydrolysis of proteins in presence of ATP.. In terms of biological role, ATP-dependent serine protease that mediates the selective degradation of mutant and abnormal proteins as well as certain short-lived regulatory proteins. Required for cellular homeostasis and for survival from DNA damage and developmental changes induced by stress. Degrades polypeptides processively to yield small peptide fragments that are 5 to 10 amino acids long. Binds to DNA in a double-stranded, site-specific manner. This is Lon protease from Mesomycoplasma hyopneumoniae (strain 232) (Mycoplasma hyopneumoniae).